The sequence spans 85 residues: UPF0386 protein RHECIAT_CH0001945 (85 aa).

It belongs to the UPF0386 family.

The polypeptide is UPF0386 protein RHECIAT_CH0001945 (Rhizobium etli (strain CIAT 652)).